We begin with the raw amino-acid sequence, 678 residues long: Inositol-trisphosphate 3-kinase C (678 aa).

Disordered regions lie at residues 26–128 and 151–300; these read LEAL…RRNS and DLQS…LDLS. A compositionally biased stretch (gly residues) spans 44-58; that stretch reads PGAGGPTGRPEGGGP. Basic and acidic residues-rich tracts occupy residues 61–76 and 107–116; these read WIEE…RTDL and EKPRQNKELD. Position 160 is a phosphoserine (Ser-160). Basic and acidic residues-rich tracts occupy residues 173-196 and 220-236; these read ELDR…DNLR and SGKE…HDTD. Residues 318–326 carry the Nuclear export signal motif; sequence LCPVPRLII. The segment at 328-380 is disordered; it reads PETPEPEAQPVGPQSRIEGGTGGFSSASSFDESEDDLVAGGGGTSDPEDRAGS. The residue at position 330 (Thr-330) is a Phosphothreonine. Ser-398 bears the Phosphoserine mark. ATP is bound by residues Lys-426, 466–468, and Asp-479; that span reads EDL. Residues Lys-481, 502-508, and 529-536 contribute to the substrate site; these read RKDMYEK and KPRYMQWR. The segment at 504–512 is calmodulin-binding; the sequence is DMYEKMVAV. Residues Lys-553 and Asp-633 each contribute to the ATP site. Lys-636 is a binding site for substrate.

It belongs to the inositol phosphokinase (IPK) family.

Its subcellular location is the nucleus. It localises to the cytoplasm. The catalysed reaction is 1D-myo-inositol 1,4,5-trisphosphate + ATP = 1D-myo-inositol 1,3,4,5-tetrakisphosphate + ADP + H(+). Its activity is regulated as follows. Activated by calcium/calmodulin. Inhibited by high concentrations of the substrate Ins(1,2,4)P3, and allosterically activated by the product Ins(1,3,4,5)P4. In terms of biological role, catalyzes the phosphorylation of 1D-myo-inositol 1,4,5-trisphosphate (InsP3) into 1D-myo-inositol 1,3,4,5-tetrakisphosphate and participates to the regulation of calcium homeostasis. Can phosphorylate inositol 2,4,5-triphosphate to inositol 2,4,5,6-tetraphosphate. This Mus musculus (Mouse) protein is Inositol-trisphosphate 3-kinase C (Itpkc).